A 1434-amino-acid chain; its full sequence is Probable ATP-dependent RNA helicase spindle-E (1434 aa).

Positions 125–292 (LAAINAHPVV…FTTTNSIPPV (168 aa)) constitute a Helicase ATP-binding domain. An ATP-binding site is contributed by 138 to 145 (GETGCGKT). A DEAH box motif is present at residues 238-241 (DEVH). Positions 354 to 526 (QSRQSYDEAL…NSVLKAKVLN (173 aa)) constitute a Helicase C-terminal domain. A Tudor domain is found at 938–1001 (ASAIAKGMMV…RLMPRELTEQ (64 aa)).

The protein belongs to the DEAD box helicase family. DEAH subfamily.

It localises to the cytoplasm. The protein localises to the perinuclear region. It is found in the cytoplasmic ribonucleoprotein granule. The catalysed reaction is ATP + H2O = ADP + phosphate + H(+). Probable ATP-binding RNA helicase which plays a central role during spermatogenesis and oogenesis by repressing transposable elements and preventing their mobilization, which is essential for the germline integrity. Acts via the piRNA metabolic process, which mediates the repression of transposable elements during meiosis by forming complexes composed of piRNAs and Piwi and govern the methylation and subsequent repression of transposons. Involved in the repression of LTR retrotransposon copia. Also involved in telomere regulation by repressing specialized telomeric retroelements HeT-A, TAHRE, and TART; Drosophila telomeres being maintained by transposition of specialized telomeric retroelements. Involved in telomeric trans-silencing, a repression mechanism by which a transposon or a transgene inserted in subtelomeric heterochromatin has the capacity to repress in trans in the female germline, a homologous transposon, or transgene located in euchromatin. Involved in the repression of testis-expressed Stellate genes by the homologous Su(Ste) repeats. Required for anteroposterior and dorsoventral axis formation during oogenesis. Key component of the perinuclear meiotic nuage, an electron dense structure involved in the post-transcriptional regulation of transposons and mRNAs; required for recruitment of other nuage comonents including vas, krimp, aub and mael. May have a role in production of piwi-interacting RNA (piRNA). This Drosophila melanogaster (Fruit fly) protein is Probable ATP-dependent RNA helicase spindle-E.